The chain runs to 374 residues: UDP-N-acetylglucosamine--N-acetylmuramyl-(pentapeptide) pyrophosphoryl-undecaprenol N-acetylglucosamine transferase (374 aa).

UDP-N-acetyl-alpha-D-glucosamine-binding positions include threonine 13–glycine 15, asparagine 124, arginine 165, serine 193, and glutamine 294.

It belongs to the glycosyltransferase 28 family. MurG subfamily.

It localises to the cell inner membrane. It carries out the reaction di-trans,octa-cis-undecaprenyl diphospho-N-acetyl-alpha-D-muramoyl-L-alanyl-D-glutamyl-meso-2,6-diaminopimeloyl-D-alanyl-D-alanine + UDP-N-acetyl-alpha-D-glucosamine = di-trans,octa-cis-undecaprenyl diphospho-[N-acetyl-alpha-D-glucosaminyl-(1-&gt;4)]-N-acetyl-alpha-D-muramoyl-L-alanyl-D-glutamyl-meso-2,6-diaminopimeloyl-D-alanyl-D-alanine + UDP + H(+). It functions in the pathway cell wall biogenesis; peptidoglycan biosynthesis. Cell wall formation. Catalyzes the transfer of a GlcNAc subunit on undecaprenyl-pyrophosphoryl-MurNAc-pentapeptide (lipid intermediate I) to form undecaprenyl-pyrophosphoryl-MurNAc-(pentapeptide)GlcNAc (lipid intermediate II). This Rhizobium rhizogenes (strain K84 / ATCC BAA-868) (Agrobacterium radiobacter) protein is UDP-N-acetylglucosamine--N-acetylmuramyl-(pentapeptide) pyrophosphoryl-undecaprenol N-acetylglucosamine transferase.